We begin with the raw amino-acid sequence, 286 residues long: Thymidylate synthase (286 aa).

Residues arginine 21 and 136–137 (RR) contribute to the dUMP site. The active-site Nucleophile is cysteine 156. DUMP is bound by residues 176 to 179 (RSVD), asparagine 187, and 217 to 219 (HIY). Aspartate 179 provides a ligand contact to (6R)-5,10-methylene-5,6,7,8-tetrahydrofolate. Residue alanine 285 participates in (6R)-5,10-methylene-5,6,7,8-tetrahydrofolate binding.

It belongs to the thymidylate synthase family. Homodimer.

It catalyses the reaction dUMP + (6R)-5,10-methylene-5,6,7,8-tetrahydrofolate = 7,8-dihydrofolate + dTMP. It functions in the pathway pyrimidine metabolism; dTTP biosynthesis. The sequence is that of Thymidylate synthase (TD) from Enterobacteria phage T4 (Bacteriophage T4).